We begin with the raw amino-acid sequence, 461 residues long: tRNA modification GTPase MnmE (461 aa).

(6S)-5-formyl-5,6,7,8-tetrahydrofolate-binding residues include Arg-27, Glu-89, and Arg-128. The 159-residue stretch at 224–382 (GLATAIVGRP…LENAIEQLFF (159 aa)) folds into the TrmE-type G domain. Asn-234 lines the K(+) pocket. GTP contacts are provided by residues 234–239 (NVGKSS), 253–259 (TDIAGTT), and 278–281 (DTAG). A Mg(2+)-binding site is contributed by Ser-238. 3 residues coordinate K(+): Thr-253, Ile-255, and Thr-258. Thr-259 lines the Mg(2+) pocket. Lys-461 is a binding site for (6S)-5-formyl-5,6,7,8-tetrahydrofolate.

This sequence belongs to the TRAFAC class TrmE-Era-EngA-EngB-Septin-like GTPase superfamily. TrmE GTPase family. Homodimer. Heterotetramer of two MnmE and two MnmG subunits. The cofactor is K(+).

It is found in the cytoplasm. Exhibits a very high intrinsic GTPase hydrolysis rate. Involved in the addition of a carboxymethylaminomethyl (cmnm) group at the wobble position (U34) of certain tRNAs, forming tRNA-cmnm(5)s(2)U34. The chain is tRNA modification GTPase MnmE from Lactobacillus johnsonii (strain CNCM I-12250 / La1 / NCC 533).